The chain runs to 230 residues: uncharacterized protein (230 aa).

A disordered region spans residues 118–195 (LLDEILPKEP…SKREMERLER (78 aa)). Residues 136–146 (QKKKEKRAALK) show a composition bias toward basic residues. 2 stretches are compositionally biased toward basic and acidic residues: residues 160-170 (ETDLYGDRDSF) and 179-195 (QRSE…RLER).

This is an uncharacterized protein from Schizosaccharomyces pombe (strain 972 / ATCC 24843) (Fission yeast).